Consider the following 69-residue polypeptide: Small, acid-soluble spore protein I (69 aa).

It belongs to the SspI family.

It localises to the spore core. In Shouchella clausii (strain KSM-K16) (Alkalihalobacillus clausii), this protein is Small, acid-soluble spore protein I.